A 381-amino-acid chain; its full sequence is Chorismate synthase (381 aa).

NADP(+)-binding residues include R41 and R47. FMN-binding positions include 127-129 (RAS), 247-248 (QA), G291, 306-310 (KPIPT), and R332.

It belongs to the chorismate synthase family. Homotetramer. FMNH2 is required as a cofactor.

It catalyses the reaction 5-O-(1-carboxyvinyl)-3-phosphoshikimate = chorismate + phosphate. It participates in metabolic intermediate biosynthesis; chorismate biosynthesis; chorismate from D-erythrose 4-phosphate and phosphoenolpyruvate: step 7/7. In terms of biological role, catalyzes the anti-1,4-elimination of the C-3 phosphate and the C-6 proR hydrogen from 5-enolpyruvylshikimate-3-phosphate (EPSP) to yield chorismate, which is the branch point compound that serves as the starting substrate for the three terminal pathways of aromatic amino acid biosynthesis. This reaction introduces a second double bond into the aromatic ring system. The protein is Chorismate synthase of Anaeromyxobacter sp. (strain K).